A 415-amino-acid polypeptide reads, in one-letter code: ER-derived vesicles protein ERV46 (415 aa).

Residues 1 to 24 (MKRSTLLSLDAFAKTEEDVRVRTR) lie on the Cytoplasmic side of the membrane. Residues 25-45 (AGGLITLSCILTTLFLLVNEW) traverse the membrane as a helical segment. At 46 to 376 (GQFNSVVTRP…VINKEQHGQT (331 aa)) the chain is on the lumenal side. The helical transmembrane segment at 377–397 (WSGFILNCITSIGGVLAVGTV) threads the bilayer. The Cytoplasmic portion of the chain corresponds to 398-415 (MDKLFYKAQRSIWGKKSQ). Positions 402-403 (FY) match the Phenylalanine-tyrosine motif motif.

Belongs to the ERGIC family. In terms of assembly, interacts with ERV41.

Its subcellular location is the endoplasmic reticulum membrane. The protein resides in the golgi apparatus membrane. Constituent of COPII-coated endoplasmic reticulum-derived transport vesicles. Required for efficient transport of a subset of secretory proteins to the Golgi. The C-terminal Phe-Tyr motif is required for exit from the endoplasmic reticulum. Facilitates retrograde transport from the Golgi to the endoplasmic reticulum. This Saccharomyces cerevisiae (strain ATCC 204508 / S288c) (Baker's yeast) protein is ER-derived vesicles protein ERV46 (ERV46).